A 112-amino-acid chain; its full sequence is UPF0122 protein CPF_1968 (112 aa).

This sequence belongs to the UPF0122 family.

Functionally, might take part in the signal recognition particle (SRP) pathway. This is inferred from the conservation of its genetic proximity to ftsY/ffh. May be a regulatory protein. The chain is UPF0122 protein CPF_1968 from Clostridium perfringens (strain ATCC 13124 / DSM 756 / JCM 1290 / NCIMB 6125 / NCTC 8237 / Type A).